A 345-amino-acid polypeptide reads, in one-letter code: Ribonucleoside-diphosphate reductase subunit beta (345 aa).

Positions 88, 118, and 121 each coordinate Fe cation. Residue tyrosine 125 is part of the active site. Glutamate 185, glutamate 219, and histidine 222 together coordinate Fe cation.

The protein belongs to the ribonucleoside diphosphate reductase small chain family. As to quaternary structure, tetramer of two alpha and two beta subunits. Fe cation serves as cofactor.

It carries out the reaction a 2'-deoxyribonucleoside 5'-diphosphate + [thioredoxin]-disulfide + H2O = a ribonucleoside 5'-diphosphate + [thioredoxin]-dithiol. Its function is as follows. Provides the precursors necessary for DNA synthesis. Catalyzes the biosynthesis of deoxyribonucleotides from the corresponding ribonucleotides. This Halalkalibacterium halodurans (strain ATCC BAA-125 / DSM 18197 / FERM 7344 / JCM 9153 / C-125) (Bacillus halodurans) protein is Ribonucleoside-diphosphate reductase subunit beta (nrdB).